Consider the following 53-residue polypeptide: Sec-independent protein translocase protein TatA (53 aa).

A helical membrane pass occupies residues 1–21 (MGMSFSHLLIVLLIIFVLFGA).

It belongs to the TatA/E family. As to quaternary structure, the Tat system comprises two distinct complexes: a TatABC complex, containing multiple copies of TatA, TatB and TatC subunits, and a separate TatA complex, containing only TatA subunits. Substrates initially bind to the TatABC complex, which probably triggers association of the separate TatA complex to form the active translocon.

Its subcellular location is the cell inner membrane. In terms of biological role, part of the twin-arginine translocation (Tat) system that transports large folded proteins containing a characteristic twin-arginine motif in their signal peptide across membranes. TatA could form the protein-conducting channel of the Tat system. The sequence is that of Sec-independent protein translocase protein TatA from Rickettsia akari (strain Hartford).